A 457-amino-acid chain; its full sequence is tRNA-2-methylthio-N(6)-dimethylallyladenosine synthase (457 aa).

Positions 3–120 (KKVYVKTFGC…LPQMIDARRA (118 aa)) constitute an MTTase N-terminal domain. The [4Fe-4S] cluster site is built by C12, C49, C83, C157, C161, and C164. Residues 143 to 377 (RVEGPSAFVS…QATIEENVAR (235 aa)) enclose the Radical SAM core domain. Positions 380–447 (QSMVGKVERI…PHSLRGELVL (68 aa)) constitute a TRAM domain.

The protein belongs to the methylthiotransferase family. MiaB subfamily. As to quaternary structure, monomer. Requires [4Fe-4S] cluster as cofactor.

Its subcellular location is the cytoplasm. The enzyme catalyses N(6)-dimethylallyladenosine(37) in tRNA + (sulfur carrier)-SH + AH2 + 2 S-adenosyl-L-methionine = 2-methylsulfanyl-N(6)-dimethylallyladenosine(37) in tRNA + (sulfur carrier)-H + 5'-deoxyadenosine + L-methionine + A + S-adenosyl-L-homocysteine + 2 H(+). In terms of biological role, catalyzes the methylthiolation of N6-(dimethylallyl)adenosine (i(6)A), leading to the formation of 2-methylthio-N6-(dimethylallyl)adenosine (ms(2)i(6)A) at position 37 in tRNAs that read codons beginning with uridine. The chain is tRNA-2-methylthio-N(6)-dimethylallyladenosine synthase from Burkholderia cenocepacia (strain HI2424).